A 98-amino-acid chain; its full sequence is Acylphosphatase (98 aa).

An Acylphosphatase-like domain is found at Thr12–His98. Catalysis depends on residues Arg27 and Asn45.

The protein belongs to the acylphosphatase family.

The catalysed reaction is an acyl phosphate + H2O = a carboxylate + phosphate + H(+). This Burkholderia thailandensis (strain ATCC 700388 / DSM 13276 / CCUG 48851 / CIP 106301 / E264) protein is Acylphosphatase (acyP).